The primary structure comprises 947 residues: Ionotropic receptor 25a (947 aa).

An N-terminal signal peptide occupies residues 1-30 (MILMNPKTSKILWLLGFLSLLSSFSLEIAA). Topologically, residues 31–562 (QTTQNINVLF…SLFKFLTVLE (532 aa)) are extracellular. Asparagine 78, asparagine 177, asparagine 277, and asparagine 434 each carry an N-linked (GlcNAc...) asparagine glycan. A helical transmembrane segment spans residues 563-583 (TNVWLCILAAYFFTSFLMWIF). The Cytoplasmic portion of the chain corresponds to 584-641 (DRWSPYSYQNNREKYKDDEEKREFNLKECLWFCMTSLTPQGGGEAPKNLSGRLVAATW). Residues 642–662 (WLFGFIIIASYTANLAAFLTV) traverse the membrane as a helical segment. The Extracellular portion of the chain corresponds to 663-858 (SRLDTPVESL…DQSDGISIQN (196 aa)). Residues asparagine 687, asparagine 715, and asparagine 762 are each glycosylated (N-linked (GlcNAc...) asparagine). Residues 859–879 (IGGVFIVIFVGIGMACITLVF) form a helical membrane-spanning segment. Residues 880–947 (EYWWYRYRKN…QYPATFKPRF (68 aa)) lie on the Cytoplasmic side of the membrane.

It belongs to the glutamate-gated ion channel (TC 1.A.10.1) family. Interacts with nocte. As to expression, in the antenna, detected in neurons of the arista and also detected in sacculus neurons which innervate the first and second chambers (at protein level). Throughout the main body of the antenna, expressed in neurons which innervate the coeloconic class of olfactory sensilla (at protein level). Expressed in multiple cells of the dorsal organ including the dorsal organ cool cells (at protein level). Detected in femur and retina. Expressed in a subset of femur chordonotal neurons and antennal Johnston's Organ neurons.

Its subcellular location is the cell membrane. The protein localises to the cell projection. The protein resides in the axon. It localises to the dendrite. It is found in the perikaryon. Its subcellular location is the cilium. Its function is as follows. Integral part of various neural sensory systems in the antenna that provide the neural basis for the response to environmental changes in temperature (thermosensation), humidity (hygrosensation) and odor detection. Required for odor-evoked electrophysiological responses in multiple neuron classes in the antenna and is likely to function as part of an olfactory receptor complex with Ir76a and Ir76b. Together with Ir21a and Ir93a, mediates the response of the larval dorsal organ cool cells, a trio of cool-responsive neurons, to cooling and is required for cool avoidance behavior. Required in chordonotal organ neurons for behavioral synchronization to low-amplitude temperature cycles and mediates circadian clock resetting by temperature. Together with Ir40a and Ir93a, mediates the response of the hydrosensory sacculus neurons to changes in relative humidity, and is required for dry detection and humidiy preference behavior. The protein is Ionotropic receptor 25a of Drosophila melanogaster (Fruit fly).